Consider the following 434-residue polypeptide: Zinc finger and BTB domain-containing protein 8A (434 aa).

The BTB domain occupies 24 to 92 (CDCSILVEGK…VYSGKLSLTG (69 aa)). A disordered region spans residues 134 to 238 (SLSDKDTGSN…SGNHVSQSEE (105 aa)). Residues Ser161 and Ser167 each carry the phosphoserine modification. Residues Lys172, Lys176, and Lys193 each participate in a glycyl lysine isopeptide (Lys-Gly) (interchain with G-Cter in SUMO2) cross-link. Over residues 192–202 (AKHEQRKEPSK) the composition is skewed to basic and acidic residues. Residues 226-238 (QTDSGNHVSQSEE) show a composition bias toward polar residues. C2H2-type zinc fingers lie at residues 275–297 (FKCP…LRCH) and 303–326 (YPCQ…RTIH). Lys430 participates in a covalent cross-link: Glycyl lysine isopeptide (Lys-Gly) (interchain with G-Cter in SUMO2).

It localises to the nucleus. In terms of biological role, may be involved in transcriptional regulation. The polypeptide is Zinc finger and BTB domain-containing protein 8A (Zbtb8a) (Mus musculus (Mouse)).